Reading from the N-terminus, the 298-residue chain is Beta-soluble NSF attachment protein (298 aa).

The protein belongs to the SNAP family. Interacts with PRKCABP, and disrupts the interaction between GRIA2 and PRKCABP, leading to the internalization of GRIA2.

Its subcellular location is the membrane. Required for vesicular transport between the endoplasmic reticulum and the Golgi apparatus. This Homo sapiens (Human) protein is Beta-soluble NSF attachment protein (NAPB).